Consider the following 291-residue polypeptide: 3-hydroxy-5-phosphonooxypentane-2,4-dione thiolase (291 aa).

The active-site Schiff-base intermediate with substrate is the K203.

It belongs to the DeoC/FbaB aldolase family. As to quaternary structure, homodecamer.

Its subcellular location is the cytoplasm. The catalysed reaction is dihydroxyacetone phosphate + acetyl-CoA = 3-hydroxy-2,4-dioxopentyl phosphate + CoA. Its function is as follows. Involved in the degradation of phospho-AI-2, thereby terminating induction of the lsr operon and closing the AI-2 signaling cycle. Catalyzes the transfer of an acetyl moiety from 3-hydroxy-5-phosphonooxypentane-2,4-dione to CoA to form glycerone phosphate and acetyl-CoA. The sequence is that of 3-hydroxy-5-phosphonooxypentane-2,4-dione thiolase from Yersinia enterocolitica serotype O:8 / biotype 1B (strain NCTC 13174 / 8081).